The chain runs to 185 residues: Ribosome-recycling factor (185 aa).

This sequence belongs to the RRF family.

Its subcellular location is the cytoplasm. Its function is as follows. Responsible for the release of ribosomes from messenger RNA at the termination of protein biosynthesis. May increase the efficiency of translation by recycling ribosomes from one round of translation to another. The sequence is that of Ribosome-recycling factor from Pseudomonas putida (strain ATCC 700007 / DSM 6899 / JCM 31910 / BCRC 17059 / LMG 24140 / F1).